Consider the following 1476-residue polypeptide: Cystic fibrosis transmembrane conductance regulator (1476 aa).

Residues 1 to 77 (MQKSPLEKAS…QLIHALRRCF (77 aa)) lie on the Cytoplasmic side of the membrane. Residues 78–98 (FWRFLFYGILLYLGEVTKAVQ) form a helical membrane-spanning segment. One can recognise an ABC transmembrane type-1 1 domain in the interval 81-365 (FLFYGILLYL…TAVQIWYDSF (285 aa)). Residues 99 to 122 (PVLLGRIIASYDPENKVERSIAIY) lie on the Extracellular side of the membrane. A helical transmembrane segment spans residues 123–146 (LGIGLCLLFIVRTLLLHPAIFGLH). Over 147–195 (RIGMQMRTAMFSLIYKKTLKLSSRVLDKISIGQLVSLLSNNLNKFDEGL) the chain is Cytoplasmic. Residues 196 to 216 (ALAHFIWIAPLQVTLLMGLLW) traverse the membrane as a helical segment. The Extracellular portion of the chain corresponds to 217–222 (DLLQFS). A helical membrane pass occupies residues 223–243 (AFCGLGLLIILVIFQAILGKM). The Cytoplasmic segment spans residues 244-298 (MVKYRDQRAAKINERLVITSEIIDNIYSVKAYCWESAMEKMIENLREVELKMTRK). A helical membrane pass occupies residues 299-319 (AAYMRFFTSSAFFFSGFFVVF). Topologically, residues 320–339 (LSVLPYTVINGIVLRKIFTT) are extracellular. Residues 340–358 (ISFCIVLRMSVTRQFPTAV) traverse the membrane as a helical segment. The Cytoplasmic portion of the chain corresponds to 359–853 (QIWYDSFGMI…YLRYFTLHKG (495 aa)). ATP is bound by residues Trp-401, 458-465 (GSTGSGKT), and Gln-493. An ABC transporter 1 domain is found at 423 to 646 (SDENNVSFSH…RPDFSSKLMG (224 aa)). Cys-524 carries S-palmitoyl cysteine lipidation. 2 positions are modified to phosphoserine: Ser-549 and Ser-660. Residues 654 to 826 (TEERRSSILT…EEINEEDLKE (173 aa)) form a disordered R region region. Residue Ser-670 is modified to Phosphoserine; by PKA. Phosphoserine is present on residues Ser-684, Ser-698, and Ser-710. Thr-715 is modified (phosphothreonine). A phosphoserine mark is found at Ser-732, Ser-763, Ser-785, Ser-790, and Ser-808. The helical transmembrane segment at 854–874 (LLLVLIWCVLVFLVEVAASLF) threads the bilayer. One can recognise an ABC transmembrane type-1 2 domain in the interval 854-1153 (LLLVLIWCVL…SSIDTDSLMR (300 aa)). The Extracellular segment spans residues 875-913 (VLWLLKNNPVNSGNNGTKISNSSYVVIITSTSFYYIFYI). Residues Asn-889 and Asn-895 are each glycosylated (N-linked (GlcNAc...) asparagine). The discontinuously helical transmembrane segment at 914 to 934 (YVGVADTLLALSLFRGLPLVH) threads the bilayer. Topologically, residues 935-985 (TLITASKILHRKMLHSILHAPMSTISKLKAGGILNRFSKDIAILDDFLPLT) are cytoplasmic. A helical membrane pass occupies residues 986 to 1006 (IFDFIQLVFIVIGAIIVVSAL). Residues 1007 to 1008 (QP) are Extracellular-facing. The helical transmembrane segment at 1009–1029 (YIFLATVPGLVVFILLRAYFL) threads the bilayer. Topologically, residues 1030–1090 (HTAQQLKQLE…TANWFMYLAT (61 aa)) are cytoplasmic. A helical membrane pass occupies residues 1091-1111 (LRWFQMRIDMIFVLFFIVVTF). Residues 1112 to 1125 (ISILTTGEGEGTAG) are Extracellular-facing. The chain crosses the membrane as a helical span at residues 1126–1146 (IILTLAMNIMSTLQWAVNSSI). Topologically, residues 1147 to 1476 (DTDSLMRSVS…TEEEVQETRL (330 aa)) are cytoplasmic. The ABC transporter 2 domain occupies 1208 to 1439 (VKDLTVKYMD…KSIFQQAISS (232 aa)). ATP-binding positions include Tyr-1215 and 1240-1247 (GRTGSGKS). Residues 1382 to 1476 (RVLKQAFAGC…TEEEVQETRL (95 aa)) are interaction with GORASP2. Cys-1391 carries S-palmitoyl cysteine lipidation. 2 positions are modified to phosphoserine: Ser-1440 and Ser-1452. The segment at 1446 to 1476 (FQGRHSSKHKPRTQITALKEETEEEVQETRL) is disordered. Residues 1466–1476 (ETEEEVQETRL) show a composition bias toward acidic residues. The PDZ-binding motif lies at 1474-1476 (TRL).

The protein belongs to the ABC transporter superfamily. ABCC family. CFTR transporter (TC 3.A.1.202) subfamily. As to quaternary structure, monomer; does not require oligomerization for channel activity. May form oligomers in the membrane. Interacts with SLC26A3, SLC26A6 and NHERF1. Interacts with SHANK2. Interacts with MYO6. Interacts (via C-terminus) with GOPC (via PDZ domain); this promotes CFTR internalization and thereby decreases channel activity. Interacts with SLC4A7 through NHERF1. Found in a complex with MYO5B and RAB11A. Interacts with ANO1. Interacts with SLC26A8. Interacts with AHCYL1; the interaction increases CFTR activity. Interacts with CSE1L. The core-glycosylated form interacts with GORASP2 (via PDZ GRASP-type 1 domain) in respone to ER stress. Interacts with MARCHF2; the interaction leads to CFTR ubiqtuitination and degradation. Interacts with ADGRG2. In terms of processing, N-glycosylated. Phosphorylated; cAMP treatment promotes phosphorylation and activates the channel. Dephosphorylation decreases the ATPase activity (in vitro). Phosphorylation at PKA sites activates the channel. Phosphorylation at PKC sites enhances the response to phosphorylation by PKA. Phosphorylated by AMPK; this inhibits channel activity. Post-translationally, ubiquitinated, leading to its degradation in the lysosome. Deubiquitination by USP10 in early endosomes enhances its endocytic recycling to the cell membrane. Ubiquitinated by RNF185 during ER stress. Ubiquitinated by MARCHF2. Expressed in the epididymis (at protein level). In the initial segment of the epididymis, detected on both the luminal and basolateral sides of the ducts where it is expressed in the duct columnar cells as well as in the interstitial smooth muscle cells. Expressed in sperm in the caput. In the cauda, detected along the luminal border but not continuously and is also expressed on the basolateral surface. Within the caudal lumen, detected on sperm. Isoform 1: Expressed in a variety of epithelial tissues including colon, kidney, lung, small intestine, pancreatic duct and testis. Isoform 2: Expressed only in testis. Isoform 3: Expressed only in testis.

Its subcellular location is the apical cell membrane. It is found in the early endosome membrane. The protein localises to the cell membrane. The protein resides in the recycling endosome membrane. It localises to the endoplasmic reticulum membrane. Its subcellular location is the nucleus. It catalyses the reaction ATP + H2O + closed Cl(-) channel = ADP + phosphate + open Cl(-) channel.. The catalysed reaction is chloride(in) = chloride(out). The enzyme catalyses hydrogencarbonate(in) = hydrogencarbonate(out). It carries out the reaction ATP + H2O = ADP + phosphate + H(+). Its function is as follows. Epithelial ion channel that plays an important role in the regulation of epithelial ion and water transport and fluid homeostasis. Mediates the transport of chloride ions across the cell membrane. Possesses an intrinsic ATPase activity and utilizes ATP to gate its channel; the passive flow of anions through the channel is gated by cycles of ATP binding and hydrolysis by the ATP-binding domains. The ion channel is also permeable to HCO(3)(-); selectivity depends on the extracellular chloride concentration. Exerts its function also by modulating the activity of other ion channels and transporters. Contributes to the regulation of the pH and the ion content of the epithelial fluid layer. Modulates the activity of the epithelial sodium channel (ENaC) complex, in part by regulating the cell surface expression of the ENaC complex. May regulate bicarbonate secretion and salvage in epithelial cells by regulating the transporter SLC4A7. Can inhibit the chloride channel activity of ANO1. Plays a role in the chloride and bicarbonate homeostasis during sperm epididymal maturation and capacitation. The chain is Cystic fibrosis transmembrane conductance regulator from Mus musculus (Mouse).